The following is a 223-amino-acid chain: Ribose-5-phosphate isomerase A (223 aa).

Substrate contacts are provided by residues 32–35 (TGST), 85–88 (DGAD), and 98–101 (KGGG). Glu107 (proton acceptor) is an active-site residue. Residue Lys125 coordinates substrate.

The protein belongs to the ribose 5-phosphate isomerase family. In terms of assembly, homodimer.

It catalyses the reaction aldehydo-D-ribose 5-phosphate = D-ribulose 5-phosphate. Its pathway is carbohydrate degradation; pentose phosphate pathway; D-ribose 5-phosphate from D-ribulose 5-phosphate (non-oxidative stage): step 1/1. Its function is as follows. Catalyzes the reversible conversion of ribose-5-phosphate to ribulose 5-phosphate. In Pseudomonas aeruginosa (strain LESB58), this protein is Ribose-5-phosphate isomerase A.